The primary structure comprises 450 residues: Cysteine protease ATG4C (450 aa).

Cys-112 (nucleophile) is an active-site residue. Catalysis depends on residues Asp-336 and His-338.

It belongs to the peptidase C54 family.

It localises to the cytoplasm. The enzyme catalyses [protein]-C-terminal L-amino acid-glycyl-phosphatidylethanolamide + H2O = [protein]-C-terminal L-amino acid-glycine + a 1,2-diacyl-sn-glycero-3-phosphoethanolamine. Functionally, cysteine protease that plays a key role in autophagy by mediating both proteolytic activation and delipidation of ATG8 family proteins. The protease activity is required for proteolytic activation of ATG8 family proteins: cleaves the C-terminal amino acid of ATG8 proteins to reveal a C-terminal glycine. Exposure of the glycine at the C-terminus is essential for ATG8 proteins conjugation to phosphatidylethanolamine (PE) and insertion to membranes, which is necessary for autophagy. In addition to the protease activity, also mediates delipidation of ATG8 family proteins. Catalyzes delipidation of PE-conjugated forms of ATG8 proteins during macroautophagy. This is Cysteine protease ATG4C from Xenopus tropicalis (Western clawed frog).